Here is a 294-residue protein sequence, read N- to C-terminus: Elongation factor Ts (294 aa).

The involved in Mg(2+) ion dislocation from EF-Tu stretch occupies residues 82–85 (TDFV).

Belongs to the EF-Ts family.

It is found in the cytoplasm. Its function is as follows. Associates with the EF-Tu.GDP complex and induces the exchange of GDP to GTP. It remains bound to the aminoacyl-tRNA.EF-Tu.GTP complex up to the GTP hydrolysis stage on the ribosome. This chain is Elongation factor Ts, found in Psychrobacter cryohalolentis (strain ATCC BAA-1226 / DSM 17306 / VKM B-2378 / K5).